The primary structure comprises 755 residues: Polyribonucleotide nucleotidyltransferase (755 aa).

Mg(2+) contacts are provided by aspartate 527 and aspartate 533. Residues 593-652 enclose the KH domain; the sequence is PRITTIKVPVDKIGEVIGPKGKMINSITEETGANISIEDDGTVFVGAADGASAQAAIDKI. The region spanning 664-733 is the S1 motif domain; it reads GERFLGTVVK…NRGKISLVPV (70 aa). The segment at 734-755 is disordered; that stretch reads GEEDAAEAPAPAEAQPADAVTQ. A compositionally biased stretch (low complexity) spans 740–755; sequence EAPAPAEAQPADAVTQ.

This sequence belongs to the polyribonucleotide nucleotidyltransferase family. Requires Mg(2+) as cofactor.

Its subcellular location is the cytoplasm. The enzyme catalyses RNA(n+1) + phosphate = RNA(n) + a ribonucleoside 5'-diphosphate. Involved in mRNA degradation. Catalyzes the phosphorolysis of single-stranded polyribonucleotides processively in the 3'- to 5'-direction. This chain is Polyribonucleotide nucleotidyltransferase, found in Mycobacteroides abscessus (strain ATCC 19977 / DSM 44196 / CCUG 20993 / CIP 104536 / JCM 13569 / NCTC 13031 / TMC 1543 / L948) (Mycobacterium abscessus).